A 424-amino-acid chain; its full sequence is Exodeoxyribonuclease 7 large subunit (424 aa).

It belongs to the XseA family. As to quaternary structure, heterooligomer composed of large and small subunits.

It localises to the cytoplasm. The catalysed reaction is Exonucleolytic cleavage in either 5'- to 3'- or 3'- to 5'-direction to yield nucleoside 5'-phosphates.. Bidirectionally degrades single-stranded DNA into large acid-insoluble oligonucleotides, which are then degraded further into small acid-soluble oligonucleotides. The protein is Exodeoxyribonuclease 7 large subunit of Cyanothece sp. (strain PCC 7425 / ATCC 29141).